Consider the following 427-residue polypeptide: N-acylglucosamine 2-epimerase (427 aa).

The tract at residues 195–216 (LLNLVEQLGEADEELAGKYAEL) is leucine-zipper.

The protein belongs to the N-acylglucosamine 2-epimerase family. As to quaternary structure, homodimer. Forms a heterodimer with renin and inhibits its activity.

It catalyses the reaction an N-acyl-D-glucosamine = an N-acyl-D-mannosamine. It functions in the pathway amino-sugar metabolism; N-acetylneuraminate degradation. Inhibited by N-ethylmaleimide, 5,5'-dithiobis-2-nitrobenzoate and iodoacetic acid. Functionally, catalyzes the interconversion of N-acetylglucosamine to N-acetylmannosamine. Involved in the N-glycolylneuraminic acid (Neu5Gc) degradation pathway: although human is not able to catalyze formation of Neu5Gc due to the inactive CMAHP enzyme, Neu5Gc is present in food and must be degraded. This Homo sapiens (Human) protein is N-acylglucosamine 2-epimerase (RENBP).